The primary structure comprises 488 residues: Regulatory protein ViaA (488 aa).

The protein belongs to the ViaA family. In terms of assembly, homodimer. Interacts with RavA.

The protein localises to the cytoplasm. In terms of biological role, component of the RavA-ViaA chaperone complex, which may act on the membrane to optimize the function of some of the respiratory chains. ViaA stimulates the ATPase activity of RavA. In Yersinia pseudotuberculosis serotype O:1b (strain IP 31758), this protein is Regulatory protein ViaA.